The chain runs to 61 residues: Early 3 Conserved Region 1-alpha protein (61 aa).

At 1–14 (MSNSSNSTSLSNFS) the chain is on the lumenal side. 3 N-linked (GlcNAc...) asparagine; by host glycosylation sites follow: N3, N6, and N12. The chain crosses the membrane as a helical span at residues 15–35 (GIGVGVILTLVILFILILALL). The Cytoplasmic segment spans residues 36-61 (CLRVAACCTHVCTYCQLFKRWGQHPR).

Belongs to the adenoviridae E3-CR1 family. In terms of assembly, interacts with E3 RID alpha and E3 RID beta. In terms of processing, only 1 of 3 three potential glycosylation sites is glycosylated. Oligosaccharides are not processed from high mannose to the complex type because the protein is retained in the endoplasmic reticulum.

The protein resides in the host endoplasmic reticulum membrane. It is found in the host cell membrane. In terms of biological role, prevents infected cell apoptosis induced by the host immune system. May act by down-regulating host TRAIL receptors. May act in complex with E3 RID alpha and beta. May play a role on cellular apoptosis regulation in the ER. The sequence is that of Early 3 Conserved Region 1-alpha protein from Human adenovirus C serotype 2 (HAdV-2).